A 633-amino-acid chain; its full sequence is MSNNIFTNNYTIVDKLSEGTYGIVYKVEHIESKKNFACKKFVIDNNFTYCNYNELIAHNEFNHSNLIEIYDILVDYGHDKCTYYVIMELCDGCLFDILFCDKVFLDESQRLDYLIQIIDGLEYMWSKGFVHNDLSLTNILVKNNKIKIADFGFMYNRFIKQDIYHRNTIYIQPPELISGHPRICDPNKIDTWALGQIFYVMCYNSVLYNYSNKTDYYLDIISKTNTPSLDIIDKLYLSDKYKKLYYNIFRKNIKKLTQNAINELVCYNKSTNKFSNDNLRKKTSSNKFIKKHMNWSVRHRPDIKQSRKLFYEILANKYPIYNSPIIQSIIPSTISFREFSFHKLWSSMNNYDYLFKSNLLFGIHFEYKIRLHHRFDYQYNLIVKIMLLMGKIIRSCFSKYNKFKCLNKFIYPNNNYLLSSQISRLENSFDRFYSMGKIIYCHYPFFENYIFDYDTIKLSNSLEFQYHFIDILDKEIPCLDAYDIFLLSNCNKMYQKYFKYMYYLFVSSPNATVFDNNIVYQSIMLIIISYKNSLIYKKLINQFLKLNISTKIKYSREINHCFNDDIINVIEIDNDYGINLNYFTVDTIITAYYIIHICRLITNEKYNLLNINFAIESKFIKYLDKLVSVIDME.

Residues 10–314 (YTIVDKLSEG…QSRKLFYEIL (305 aa)) enclose the Protein kinase domain. Residues 16 to 24 (LSEGTYGIV) and lysine 39 each bind ATP. Aspartate 133 functions as the Proton acceptor in the catalytic mechanism.

This sequence belongs to the protein kinase superfamily. Ser/Thr protein kinase family.

The enzyme catalyses L-seryl-[protein] + ATP = O-phospho-L-seryl-[protein] + ADP + H(+). It catalyses the reaction L-threonyl-[protein] + ATP = O-phospho-L-threonyl-[protein] + ADP + H(+). The protein is Putative serine/threonine-protein kinase L232 of Acanthamoeba polyphaga mimivirus (APMV).